The chain runs to 534 residues: Bifunctional pantoate ligase/cytidylate kinase (534 aa).

Residues 1-302 (MRLLTTVAAL…LGSTRLIDNT (302 aa)) form a pantoate--beta-alanine ligase region. 48 to 55 (MGSLHQGH) serves as a coordination point for ATP. His-55 acts as the Proton donor in catalysis. Gln-79 contacts (R)-pantoate. Position 79 (Gln-79) interacts with beta-alanine. Position 172–175 (172–175 (GQKD)) interacts with ATP. Gln-178 contributes to the (R)-pantoate binding site. Residues Val-201 and 209 to 212 (CSSR) each bind ATP. Residues 303 to 534 (ILRDRQPIIA…DYYQQRLSQW (232 aa)) form a cytidylate kinase region.

This sequence in the N-terminal section; belongs to the pantothenate synthetase family. The protein in the C-terminal section; belongs to the cytidylate kinase family. Type 1 subfamily.

The protein localises to the cytoplasm. The enzyme catalyses (R)-pantoate + beta-alanine + ATP = (R)-pantothenate + AMP + diphosphate + H(+). It carries out the reaction CMP + ATP = CDP + ADP. It catalyses the reaction dCMP + ATP = dCDP + ADP. It participates in cofactor biosynthesis; (R)-pantothenate biosynthesis; (R)-pantothenate from (R)-pantoate and beta-alanine: step 1/1. Its function is as follows. Catalyzes the condensation of pantoate with beta-alanine in an ATP-dependent reaction via a pantoyl-adenylate intermediate. In terms of biological role, catalyzes the transfer of a phosphate group from ATP to either CMP or dCMP to form CDP or dCDP and ADP, respectively. This is Bifunctional pantoate ligase/cytidylate kinase from Nostoc sp. (strain PCC 7120 / SAG 25.82 / UTEX 2576).